Reading from the N-terminus, the 402-residue chain is DNA primase DnaG (402 aa).

The Toprim domain occupies 165-243; the sequence is PNLIIVEGRA…KIDFVARAPV (79 aa). Mg(2+) contacts are provided by glutamate 171, aspartate 216, and aspartate 218.

The protein belongs to the archaeal DnaG primase family. Forms a ternary complex with MCM helicase and DNA. Component of the archaeal exosome complex. The cofactor is Mg(2+).

The enzyme catalyses ssDNA + n NTP = ssDNA/pppN(pN)n-1 hybrid + (n-1) diphosphate.. In terms of biological role, RNA polymerase that catalyzes the synthesis of short RNA molecules used as primers for DNA polymerase during DNA replication. Also part of the exosome, which is a complex involved in RNA degradation. Acts as a poly(A)-binding protein that enhances the interaction between heteromeric, adenine-rich transcripts and the exosome. The sequence is that of DNA primase DnaG from Saccharolobus islandicus (strain Y.N.15.51 / Yellowstone #2) (Sulfolobus islandicus).